Consider the following 358-residue polypeptide: tRNA-specific 2-thiouridylase MnmA (358 aa).

ATP contacts are provided by residues 7 to 14 and Leu33; that span reads AMSGGVDS. The active-site Nucleophile is the Cys101. A disulfide bridge links Cys101 with Cys197. Position 125 (Gly125) interacts with ATP. The segment at 147 to 149 is interaction with tRNA; it reads KDQ. The active-site Cysteine persulfide intermediate is the Cys197.

This sequence belongs to the MnmA/TRMU family.

The protein localises to the cytoplasm. The enzyme catalyses S-sulfanyl-L-cysteinyl-[protein] + uridine(34) in tRNA + AH2 + ATP = 2-thiouridine(34) in tRNA + L-cysteinyl-[protein] + A + AMP + diphosphate + H(+). Catalyzes the 2-thiolation of uridine at the wobble position (U34) of tRNA, leading to the formation of s(2)U34. This chain is tRNA-specific 2-thiouridylase MnmA, found in Rickettsia typhi (strain ATCC VR-144 / Wilmington).